A 523-amino-acid chain; its full sequence is Membrane protein PTM1 (523 aa).

The first 26 residues, 1 to 26 (MRVYQFCRPFQLFTYFLCYLLVFVKA), serve as a signal peptide directing secretion. At 27–197 (NKEKISQKNY…LAGTEINKLP (171 aa)) the chain is on the lumenal side. Asparagine 132 is a glycosylation site (N-linked (GlcNAc...) asparagine). Residues 198–218 (LYGLLAVAYVVAMALYSFAFW) form a helical membrane-spanning segment. Residues 219-230 (KHKHELLPLQKY) lie on the Cytoplasmic side of the membrane. The helical transmembrane segment at 231–251 (LLAFFVFLTAETIFVWAYYDL) threads the bilayer. Over 252-265 (KNEKGDTAGIKVYM) the chain is Lumenal. The helical transmembrane segment at 266-286 (VFLSILTAGKVTFSFFLLLII) threads the bilayer. The Cytoplasmic portion of the chain corresponds to 287 to 304 (ALGYGIVYPKLNKTLMRR). Residues 305–325 (CQMYGALTYAICIGFLIQSYL) traverse the membrane as a helical segment. Topologically, residues 326 to 333 (TDMEAPSP) are lumenal. The chain crosses the membrane as a helical span at residues 334–354 (LILITLIPMALALIIFYYMII). The Cytoplasmic segment spans residues 355 to 381 (RSMTKTVIYLKEQRQIVKLNMYKKLLY). The helical transmembrane segment at 382 to 402 (IIYASFLSVLAGSIVSSFIYV) threads the bilayer. Topologically, residues 403-417 (GMNTIDMIEKNWRSR) are lumenal. A helical membrane pass occupies residues 418–438 (FFVTDFWPTLVYFIVFVTIAF). At 439–523 (LWRPTDTSYM…HGPVSPSPTK (85 aa)) the chain is on the cytoplasmic side. Serine 480 carries the phosphoserine modification. 2 positions are modified to phosphothreonine: threonine 483 and threonine 498. Positions 483–523 (TGERGIDEDDLNLNFTDDEEGHDNVNNHSQGHGPVSPSPTK) are disordered. Residues 488-503 (IDEDDLNLNFTDDEEG) show a composition bias toward acidic residues.

The protein belongs to the LU7TM family.

The protein localises to the golgi apparatus membrane. It is found in the early endosome membrane. The chain is Membrane protein PTM1 (PTM1) from Saccharomyces cerevisiae (strain YJM789) (Baker's yeast).